The sequence spans 401 residues: Adaptive-response sensory kinase SasA (401 aa).

The Histidine kinase domain occupies 175 to 400 (MLVHDLRNPL…WFHFTLPVYP (226 aa)). Position 178 is a phosphohistidine; by autocatalysis (His178).

Homooligomerizes. Interacts with KaiC. Participates in the KaiABC clock complex, whose core is composed of a KaiC homohexamer, 6 KaiB and up to 6 KaiA dimers. SasA and KaiB(fs) compete to bind to KaiC.

It catalyses the reaction ATP + protein L-histidine = ADP + protein N-phospho-L-histidine.. Member of the two-component regulatory system SasA/RpaA involved in genome-wide circadian gene expression. One of several clock output pathways. Participates in the Kai clock protein complex, the main circadian regulator in cyanobacteria, via its interaction with KaiC. KaiC enhances the autophosphorylation activity of SasA, which then transfers its phosphate group to RpaA to activate it. In addition to its output function, recruits fold-shifted KaiB (KaiB(fs)) to KaiC to cooperatively form the KaiB(6):KaiC(6) complex (independent of SasA kinase activity). Required for robustness of the circadian rhythm of gene expression and is involved in clock output, also required for adaptation to light/dark cycles. This Trichormus variabilis (strain ATCC 29413 / PCC 7937) (Anabaena variabilis) protein is Adaptive-response sensory kinase SasA.